A 294-amino-acid chain; its full sequence is Energy-coupling factor transporter ATP-binding protein EcfA1 (294 aa).

The ABC transporter domain occupies isoleucine 27–aspartate 260. Residue glycine 60–serine 67 coordinates ATP.

Belongs to the ABC transporter superfamily. Energy-coupling factor EcfA family. As to quaternary structure, forms a stable energy-coupling factor (ECF) transporter complex composed of 2 membrane-embedded substrate-binding proteins (S component), 2 ATP-binding proteins (A component) and 2 transmembrane proteins (T component).

The protein resides in the cell membrane. Functionally, ATP-binding (A) component of a common energy-coupling factor (ECF) ABC-transporter complex. Unlike classic ABC transporters this ECF transporter provides the energy necessary to transport a number of different substrates. The chain is Energy-coupling factor transporter ATP-binding protein EcfA1 from Ureaplasma parvum serovar 3 (strain ATCC 700970).